Reading from the N-terminus, the 209-residue chain is Imidazoleglycerol-phosphate dehydratase (209 aa).

The protein belongs to the imidazoleglycerol-phosphate dehydratase family.

Its subcellular location is the cytoplasm. The enzyme catalyses D-erythro-1-(imidazol-4-yl)glycerol 3-phosphate = 3-(imidazol-4-yl)-2-oxopropyl phosphate + H2O. It participates in amino-acid biosynthesis; L-histidine biosynthesis; L-histidine from 5-phospho-alpha-D-ribose 1-diphosphate: step 6/9. The sequence is that of Imidazoleglycerol-phosphate dehydratase from Paracidovorax citrulli (strain AAC00-1) (Acidovorax citrulli).